The sequence spans 381 residues: Cyclin-dependent kinase inhibitor CIP1 (381 aa).

Over residues M1 to H11 the composition is skewed to basic residues. Residues M1–D30 are disordered. The segment covering R17 to D30 has biased composition (basic and acidic residues). A phosphothreonine mark is found at T65, T69, and T73.

As to quaternary structure, interact with the CDC28/CLN2 complex. In terms of processing, phosphorylated during S phase in a CDC28-dependent manner. Phosphorylated at Thr-65 and Thr-73 by HOG1 under osmotic stress. The phosphorylations of Thr-65 and Thr-73 are necessary for CIP1-induced growth inhibition.

The protein localises to the cytoplasm. Its subcellular location is the nucleus. Acts as an inhibitor of the CDC28/CLN2 cyclin-dependent kinase complex. Stabilizes the CDC28 inhibitor SIC1. Negatively regulates the G1/S phase transition. Contributes to osmostress-induced transitory G1 delay. The protein is Cyclin-dependent kinase inhibitor CIP1 of Saccharomyces cerevisiae (strain ATCC 204508 / S288c) (Baker's yeast).